The primary structure comprises 423 residues: Phosphoribosylamine--glycine ligase (423 aa).

Positions 107–312 (KAFADRYGLP…LVPYLVACAN (206 aa)) constitute an ATP-grasp domain. Residue 133–193 (LELFEPPYVI…EEFLEGEIGS (61 aa)) participates in ATP binding. 3 residues coordinate Mg(2+): Glu270, Glu282, and Asn284. 3 residues coordinate Mn(2+): Glu270, Glu282, and Asn284.

Belongs to the GARS family. Mg(2+) serves as cofactor. Mn(2+) is required as a cofactor.

The enzyme catalyses 5-phospho-beta-D-ribosylamine + glycine + ATP = N(1)-(5-phospho-beta-D-ribosyl)glycinamide + ADP + phosphate + H(+). The protein operates within purine metabolism; IMP biosynthesis via de novo pathway; N(1)-(5-phospho-D-ribosyl)glycinamide from 5-phospho-alpha-D-ribose 1-diphosphate: step 2/2. The protein is Phosphoribosylamine--glycine ligase of Phenylobacterium zucineum (strain HLK1).